The primary structure comprises 78 residues: UPF0349 protein RBAM_029300 (78 aa).

Belongs to the UPF0349 family.

The protein is UPF0349 protein RBAM_029300 of Bacillus velezensis (strain DSM 23117 / BGSC 10A6 / LMG 26770 / FZB42) (Bacillus amyloliquefaciens subsp. plantarum).